Here is a 280-residue protein sequence, read N- to C-terminus: Nitrogenase iron-iron protein alpha chain (280 aa).

Residues cysteine 5, cysteine 31, and cysteine 94 each coordinate [8Fe-7S] cluster. Cysteine 213 is a [8Fe-9S-C-homocitryl] cluster binding site.

This sequence belongs to the NifD/NifK/NifE/NifN family. As to quaternary structure, hexamer of two alpha, two beta, and two delta chains. Requires [8Fe-7S] cluster as cofactor. [8Fe-9S-C-homocitryl] cluster serves as cofactor.

The catalysed reaction is N2 + 8 reduced [2Fe-2S]-[ferredoxin] + 16 ATP + 16 H2O = H2 + 8 oxidized [2Fe-2S]-[ferredoxin] + 2 NH4(+) + 16 ADP + 16 phosphate + 6 H(+). Functionally, this iron-iron protein is part of the nitrogenase complex that catalyzes the key enzymatic reactions in nitrogen fixation. Other nitrogenase complexes utilize a molybdenum-iron protein or a vanadium-iron protein. The protein is Nitrogenase iron-iron protein alpha chain (anfD) of Heliomicrobium gestii (Heliobacterium gestii).